The sequence spans 263 residues: MVHHGQMHAQPGVGLRPDTPVASGQLPSTSIRSRRSGISKAQRETWERLWPELGLLALPQSPRGTPVDTRAWFGRDAPVVLEIGSGSGTSTLAMAKAEPHVDVIAVDVYRRGLAQLLCAIDKVGSDGINIRLILGNAVDVLQHLIAPDSLCGVRVFFPDPWPKARHHKRRLLQPATMALIADRLVPSGVLHAATDHPGYAEHIAAAGDAEPRLVRVDPDTELLPISVVRPATKYERKAQLGGGAVIELLWKKHGCSERDLKIR.

The tract at residues 1–39 (MVHHGQMHAQPGVGLRPDTPVASGQLPSTSIRSRRSGIS) is disordered. Residues Glu-82, Asp-107, Asn-136, and Asp-159 each contribute to the S-adenosyl-L-methionine site. The active site involves Asp-159. Residues Lys-163, Asp-195, and 232 to 235 (TKYE) each bind substrate.

The protein belongs to the class I-like SAM-binding methyltransferase superfamily. TrmB family.

The enzyme catalyses guanosine(46) in tRNA + S-adenosyl-L-methionine = N(7)-methylguanosine(46) in tRNA + S-adenosyl-L-homocysteine. The protein operates within tRNA modification; N(7)-methylguanine-tRNA biosynthesis. In terms of biological role, catalyzes the formation of N(7)-methylguanine at position 46 (m7G46) in tRNA. In Mycobacterium bovis (strain ATCC BAA-935 / AF2122/97), this protein is tRNA (guanine-N(7)-)-methyltransferase.